The chain runs to 91 residues: Acyl carrier protein (91 aa).

Positions 4-79 constitute a Carrier domain; the sequence is QQILDKVQSI…QAVDYILQHK (76 aa). Serine 39 bears the O-(pantetheine 4'-phosphoryl)serine mark.

This sequence belongs to the acyl carrier protein (ACP) family. 4'-phosphopantetheine is transferred from CoA to a specific serine of apo-ACP by AcpS. This modification is essential for activity because fatty acids are bound in thioester linkage to the sulfhydryl of the prosthetic group.

It localises to the plastid. The protein localises to the chloroplast. Its pathway is lipid metabolism; fatty acid biosynthesis. Its function is as follows. Carrier of the growing fatty acid chain in fatty acid biosynthesis. This Cyanidioschyzon merolae (strain NIES-3377 / 10D) (Unicellular red alga) protein is Acyl carrier protein.